We begin with the raw amino-acid sequence, 473 residues long: Aspartyl/glutamyl-tRNA(Asn/Gln) amidotransferase subunit B (473 aa).

Belongs to the GatB/GatE family. GatB subfamily. As to quaternary structure, heterotrimer of A, B and C subunits.

The enzyme catalyses L-glutamyl-tRNA(Gln) + L-glutamine + ATP + H2O = L-glutaminyl-tRNA(Gln) + L-glutamate + ADP + phosphate + H(+). It carries out the reaction L-aspartyl-tRNA(Asn) + L-glutamine + ATP + H2O = L-asparaginyl-tRNA(Asn) + L-glutamate + ADP + phosphate + 2 H(+). Its function is as follows. Allows the formation of correctly charged Asn-tRNA(Asn) or Gln-tRNA(Gln) through the transamidation of misacylated Asp-tRNA(Asn) or Glu-tRNA(Gln) in organisms which lack either or both of asparaginyl-tRNA or glutaminyl-tRNA synthetases. The reaction takes place in the presence of glutamine and ATP through an activated phospho-Asp-tRNA(Asn) or phospho-Glu-tRNA(Gln). This chain is Aspartyl/glutamyl-tRNA(Asn/Gln) amidotransferase subunit B, found in Campylobacter hominis (strain ATCC BAA-381 / DSM 21671 / CCUG 45161 / LMG 19568 / NCTC 13146 / CH001A).